Here is a 252-residue protein sequence, read N- to C-terminus: 2-succinyl-6-hydroxy-2,4-cyclohexadiene-1-carboxylate synthase (252 aa).

Belongs to the AB hydrolase superfamily. MenH family. In terms of assembly, monomer.

It carries out the reaction 5-enolpyruvoyl-6-hydroxy-2-succinyl-cyclohex-3-ene-1-carboxylate = (1R,6R)-6-hydroxy-2-succinyl-cyclohexa-2,4-diene-1-carboxylate + pyruvate. The protein operates within quinol/quinone metabolism; 1,4-dihydroxy-2-naphthoate biosynthesis; 1,4-dihydroxy-2-naphthoate from chorismate: step 3/7. Its pathway is quinol/quinone metabolism; menaquinone biosynthesis. Functionally, catalyzes a proton abstraction reaction that results in 2,5-elimination of pyruvate from 2-succinyl-5-enolpyruvyl-6-hydroxy-3-cyclohexene-1-carboxylate (SEPHCHC) and the formation of 2-succinyl-6-hydroxy-2,4-cyclohexadiene-1-carboxylate (SHCHC). This is 2-succinyl-6-hydroxy-2,4-cyclohexadiene-1-carboxylate synthase from Klebsiella pneumoniae (strain 342).